Here is a 134-residue protein sequence, read N- to C-terminus: Agouti-related protein (134 aa).

The signal sequence occupies residues 1–20; it reads MLTTMLLSCALLLAMPTMLG. Positions 21 to 84 are excised as a propeptide; it reads AQIGLAPLEG…VLDPEGRKAR (64 aa). 5 disulfide bridges follow: Cys-89/Cys-104, Cys-96/Cys-110, Cys-103/Cys-121, Cys-107/Cys-131, and Cys-112/Cys-119. Residues 89-131 enclose the Agouti domain; it reads CVRLHESCLGHQVPCCDPCATCYCRFFNAFCYCRKLGTATNPC. The interval 113–115 is interaction with melanocortin receptors; the sequence is RFF.

Interacts with melanocortin receptors MC3R, MC4R and MC5R.

Its subcellular location is the secreted. It is found in the golgi apparatus lumen. In terms of biological role, plays a role in weight homeostasis. Involved in the control of feeding behavior through the central melanocortin system. Acts as alpha melanocyte-stimulating hormone antagonist by inhibiting cAMP production mediated by stimulation of melanocortin receptors within the hypothalamus and adrenal gland. Has very low activity with MC5R. Is an inverse agonist for MC3R and MC4R being able to suppress their constitutive activity. It promotes MC3R and MC4R endocytosis in an arrestin-dependent manner. The protein is Agouti-related protein (AGRP) of Sus scrofa (Pig).